Here is a 481-residue protein sequence, read N- to C-terminus: Aromatic amino acid aminotransferase DDB_G0272014 (481 aa).

Lysine 300 is modified (N6-(pyridoxal phosphate)lysine).

The protein belongs to the class-I pyridoxal-phosphate-dependent aminotransferase family. Pyridoxal 5'-phosphate is required as a cofactor.

Its subcellular location is the cytoplasm. The catalysed reaction is an aromatic L-alpha-amino acid + 2-oxoglutarate = an aromatic oxo-acid + L-glutamate. Functionally, has aromatic amino acid transaminase activity. This chain is Aromatic amino acid aminotransferase DDB_G0272014, found in Dictyostelium discoideum (Social amoeba).